Reading from the N-terminus, the 174-residue chain is Ribosome maturation factor RimP (174 aa).

Belongs to the RimP family.

It is found in the cytoplasm. Its function is as follows. Required for maturation of 30S ribosomal subunits. In Acinetobacter baylyi (strain ATCC 33305 / BD413 / ADP1), this protein is Ribosome maturation factor RimP.